Consider the following 137-residue polypeptide: Early nodulin-55-1 (137 aa).

The Phytocyanin domain occupies 1–67 (KYDERTESVH…GLKLMVVVMS (67 aa)). Residues Asn13, Asn51, and Asn68 are each glycosylated (N-linked (GlcNAc...) asparagine). The cysteines at positions 20 and 55 are disulfide-linked. The segment at 70 to 115 (TKKKLIHSPSPSSPSPSPSPSPSPSPSPSPSLSSPSPSPLPNNQGV) is disordered. The segment covering 80-98 (PSSPSPSPSPSPSPSPSPS) has biased composition (pro residues).

It belongs to the early nodulin-like (ENODL) family.

It localises to the symbiosome. Its subcellular location is the peribacteroid membrane. May act as a carbohydrate transporter. The protein is Early nodulin-55-1 of Glycine max (Soybean).